A 632-amino-acid chain; its full sequence is MNSNSTIGRTTLGESDTISLSFSEPSSSLNSRSTDVVFASTSTLVPQQGSLTSLPPVSSTATPTYYSTSLTYDETLHTSIDVSSTSTLVSSTDSSSSSEQDTYSSQYDPATSSYSIITPSMSIFSSTSPMSSSSSITSEWSSLTSTTPTLSSSATSLSSSWSSLSSPSSLLVSSSLSSSSYSDTKLFSFDSRSSIFSPSTPTVISPSYTYLSSISATSFQISTTSELSSSWFSTISPSTTSNKDTTFPSSSRNTSTSFYSSSLSSTNDFSTISKSSKLSPSASSSTVSISTISVPTSSSVSSSSSKVPSNRPSSSSSSDDTTSAYSSTYTFQSLQSTTSSSIPPTTQTPSTSTISTSPIPTSSQVFNTAAISSSEDSKTIYYFYTQTYDITDSSTTFVTGLPTTIAVAKSEVTSFSAPSSTITADMSFYQHWLDGSLDNNKNQGPSKTNTGTIVGSVVGSVGGILICVLVVWFMLVRKRKAKRHFKENDSFCHEIGRRTGFPTTAQAKEASLQAQDSGSQQRNTETASANNPFSNEFNFKARGNPPPVPPPRNVTATNGSFQNMRSNFMDQENRFSYGSSFTYSSLGSSTQGGFSTLSSNSIRLGRGLDNDISHDERNTVQNNSQGFLREII.

A compositionally biased stretch (polar residues) spans 1–18; that stretch reads MNSNSTIGRTTLGESDTI. 5 disordered regions span residues 1–33, 87–109, 236–267, 295–322, and 335–359; these read MNSN…NSRS, TLVS…QYDP, SPST…SSTN, PTSS…DDTT, and QSTT…TSPI. The N-linked (GlcNAc...) asparagine glycan is linked to asparagine 4. Low complexity-rich tracts occupy residues 19–33 and 87–108; these read SLSF…NSRS and TLVS…SQYD. The N-linked (GlcNAc...) asparagine glycan is linked to asparagine 253. Residues 453–473 form a helical membrane-spanning segment; the sequence is IVGSVVGSVGGILICVLVVWF. N-linked (GlcNAc...) asparagine glycosylation is present at asparagine 488. Over residues 506 to 537 the composition is skewed to polar residues; that stretch reads QAKEASLQAQDSGSQQRNTETASANNPFSNEF. The interval 506-551 is disordered; it reads QAKEASLQAQDSGSQQRNTETASANNPFSNEFNFKARGNPPPVPPP. Lysine 508 is covalently cross-linked (Glycyl lysine isopeptide (Lys-Gly) (interchain with G-Cter in ubiquitin)). N-linked (GlcNAc...) asparagine glycans are attached at residues asparagine 553, asparagine 558, and asparagine 622. The residue at position 624 (serine 624) is a Phosphoserine.

This sequence belongs to the TDA7 family.

Its subcellular location is the vacuole membrane. This Saccharomyces cerevisiae (strain Lalvin EC1118 / Prise de mousse) (Baker's yeast) protein is Topoisomerase I damage affected protein 7 (TDA7).